Here is a 113-residue protein sequence, read N- to C-terminus: U11-theraphotoxin-Hhn1q (113 aa).

The first 21 residues, 1–21 (MNTVRVTFLLVFVLAVSLGQA), serve as a signal peptide directing secretion. Positions 22–74 (DKDENRMEMQEKTEQGKSYLDFAENLLLQKLEELEAKLLEEDSEESRNSRQKR) are excised as a propeptide. The tract at residues 61 to 82 (EEDSEESRNSRQKRCIGEGVPC) is disordered. 3 disulfide bridges follow: Cys-75/Cys-90, Cys-82/Cys-95, and Cys-89/Cys-110.

It belongs to the neurotoxin 14 (magi-1) family. 01 (HNTX-16) subfamily. Expressed by the venom gland.

Its subcellular location is the secreted. In terms of biological role, probable ion channel inhibitor. The polypeptide is U11-theraphotoxin-Hhn1q (Cyriopagopus hainanus (Chinese bird spider)).